The chain runs to 321 residues: o-succinylbenzoate synthase (321 aa).

The Proton donor role is filled by K134. Residues D162, E191, and D214 each contribute to the Mg(2+) site. The Proton acceptor role is filled by K236.

It belongs to the mandelate racemase/muconate lactonizing enzyme family. MenC type 1 subfamily. Requires a divalent metal cation as cofactor.

It catalyses the reaction (1R,6R)-6-hydroxy-2-succinyl-cyclohexa-2,4-diene-1-carboxylate = 2-succinylbenzoate + H2O. Its pathway is quinol/quinone metabolism; 1,4-dihydroxy-2-naphthoate biosynthesis; 1,4-dihydroxy-2-naphthoate from chorismate: step 4/7. It functions in the pathway quinol/quinone metabolism; menaquinone biosynthesis. In terms of biological role, converts 2-succinyl-6-hydroxy-2,4-cyclohexadiene-1-carboxylate (SHCHC) to 2-succinylbenzoate (OSB). In Klebsiella pneumoniae (strain 342), this protein is o-succinylbenzoate synthase.